Reading from the N-terminus, the 374-residue chain is Chaperone protein DnaJ (374 aa).

The J domain occupies 5-70; the sequence is DFYEILGLGK…QKRDAYDRYG (66 aa). The segment at 28-47 is disordered; the sequence is LAMKHHPDRNPDSKGAEDKF. Positions 35–47 are enriched in basic and acidic residues; sequence DRNPDSKGAEDKF. Residues 134–212 form a CR-type zinc finger; sequence GYDTTIRVPS…CSGAGKIKRN (79 aa). Zn(2+)-binding residues include C147, C150, C164, C167, C186, C189, C200, and C203. 4 CXXCXGXG motif repeats span residues 147–154, 164–171, 186–193, and 200–207; these read CETCDGSG, CTTCGGHG, CPKCHGSG, and CTACSGAG.

This sequence belongs to the DnaJ family. As to quaternary structure, homodimer. The cofactor is Zn(2+).

It localises to the cytoplasm. Functionally, participates actively in the response to hyperosmotic and heat shock by preventing the aggregation of stress-denatured proteins and by disaggregating proteins, also in an autonomous, DnaK-independent fashion. Unfolded proteins bind initially to DnaJ; upon interaction with the DnaJ-bound protein, DnaK hydrolyzes its bound ATP, resulting in the formation of a stable complex. GrpE releases ADP from DnaK; ATP binding to DnaK triggers the release of the substrate protein, thus completing the reaction cycle. Several rounds of ATP-dependent interactions between DnaJ, DnaK and GrpE are required for fully efficient folding. Also involved, together with DnaK and GrpE, in the DNA replication of plasmids through activation of initiation proteins. In Herminiimonas arsenicoxydans, this protein is Chaperone protein DnaJ.